The sequence spans 54 residues: Ribulose bisphosphate carboxylase large chain (54 aa).

The propeptide occupies Met-1–Ser-2. At Pro-3 the chain carries N-acetylproline. Residue Lys-14 is modified to N6,N6,N6-trimethyllysine.

The protein belongs to the RuBisCO large chain family. Type I subfamily. As to quaternary structure, heterohexadecamer of 8 large chains and 8 small chains.

The protein localises to the plastid. The protein resides in the chloroplast. It carries out the reaction 2 (2R)-3-phosphoglycerate + 2 H(+) = D-ribulose 1,5-bisphosphate + CO2 + H2O. It catalyses the reaction D-ribulose 1,5-bisphosphate + O2 = 2-phosphoglycolate + (2R)-3-phosphoglycerate + 2 H(+). RuBisCO catalyzes two reactions: the carboxylation of D-ribulose 1,5-bisphosphate, the primary event in carbon dioxide fixation, as well as the oxidative fragmentation of the pentose substrate in the photorespiration process. Both reactions occur simultaneously and in competition at the same active site. The sequence is that of Ribulose bisphosphate carboxylase large chain (rbcL) from Geum borisii (Avens).